The primary structure comprises 107 residues: Integration host factor subunit beta (107 aa).

The disordered stretch occupies residues 56–107 (RPARVGRNPKSGEKVQVPEKFVPHFKPGKELRERVDGRAGEPLKADDPDDER). The segment covering 82–101 (PGKELRERVDGRAGEPLKAD) has biased composition (basic and acidic residues).

This sequence belongs to the bacterial histone-like protein family. In terms of assembly, heterodimer of an alpha and a beta chain.

Its function is as follows. This protein is one of the two subunits of integration host factor, a specific DNA-binding protein that functions in genetic recombination as well as in transcriptional and translational control. This chain is Integration host factor subunit beta, found in Burkholderia vietnamiensis (strain G4 / LMG 22486) (Burkholderia cepacia (strain R1808)).